We begin with the raw amino-acid sequence, 448 residues long: Glutamyl-tRNA reductase (448 aa).

Substrate-binding positions include 52-55 (TCNR), serine 105, 110-112 (EDQ), and glutamine 116. Residue cysteine 53 is the Nucleophile of the active site. 184–189 (GAGEMG) is an NADP(+) binding site. The tract at residues 406–435 (DPDFGGPDQATPPEFTKGMSVEDIPDGMRD) is disordered.

Belongs to the glutamyl-tRNA reductase family. In terms of assembly, homodimer.

The catalysed reaction is (S)-4-amino-5-oxopentanoate + tRNA(Glu) + NADP(+) = L-glutamyl-tRNA(Glu) + NADPH + H(+). It participates in porphyrin-containing compound metabolism; protoporphyrin-IX biosynthesis; 5-aminolevulinate from L-glutamyl-tRNA(Glu): step 1/2. Catalyzes the NADPH-dependent reduction of glutamyl-tRNA(Glu) to glutamate 1-semialdehyde (GSA). This chain is Glutamyl-tRNA reductase, found in Haloarcula marismortui (strain ATCC 43049 / DSM 3752 / JCM 8966 / VKM B-1809) (Halobacterium marismortui).